Consider the following 428-residue polypeptide: CinA-like protein (428 aa).

It belongs to the CinA family.

The chain is CinA-like protein from Mycobacterium leprae (strain TN).